The sequence spans 430 residues: DD-carboxypeptidase/endopeptidase Mpg (430 aa).

The Zn(2+) site is built by His-295, Asp-299, and His-375.

This sequence belongs to the peptidase M23B family. Monomer. Zn(2+) serves as cofactor. In terms of processing, likely to be synthesized as a proenzyme. The cleavage of the N-terminal domain is probably required for the activation of the enzyme.

The protein resides in the cell outer membrane. Peptidoglycan (PG) degradation activity is completely inhibited by zinc chelating EDTA and phenanthroline. Functionally, has both endopeptidase and DD-carboxypeptidase activities. Degrades cell wall peptidoglycan (PG) to allow consummate expression of pili. Degrades N.gonorrhoeae and E.coli PG side chains in vitro. Required for proper piliation, which in turn is required for normal colony morphology, resistance to H(2)O(2) damage and defense against killing by human polymorphonuclear leukocytes (PMNs). Involved in type IV pilus biogenesis. Involved in resistance against non-oxidative killing by adherent CXCL8/IL8-primed human PMNs. Protects from killing by PMN-produced antimicrobial factors, which kill by a mechanism completely independent of reactive oxygen species (ROS) production of the PMNs. Provides protection against oxidative damage caused by peroxides H(2)O(2) and cumene hydroperoxide in vitro. The polypeptide is DD-carboxypeptidase/endopeptidase Mpg (Neisseria gonorrhoeae (strain ATCC 700825 / FA 1090)).